Here is a 264-residue protein sequence, read N- to C-terminus: Acyl-[acyl-carrier-protein]--UDP-N-acetylglucosamine O-acyltransferase (264 aa).

Belongs to the transferase hexapeptide repeat family. LpxA subfamily. In terms of assembly, homotrimer.

The protein localises to the cytoplasm. The enzyme catalyses a (3R)-hydroxyacyl-[ACP] + UDP-N-acetyl-alpha-D-glucosamine = a UDP-3-O-[(3R)-3-hydroxyacyl]-N-acetyl-alpha-D-glucosamine + holo-[ACP]. Its pathway is glycolipid biosynthesis; lipid IV(A) biosynthesis; lipid IV(A) from (3R)-3-hydroxytetradecanoyl-[acyl-carrier-protein] and UDP-N-acetyl-alpha-D-glucosamine: step 1/6. Involved in the biosynthesis of lipid A, a phosphorylated glycolipid that anchors the lipopolysaccharide to the outer membrane of the cell. The sequence is that of Acyl-[acyl-carrier-protein]--UDP-N-acetylglucosamine O-acyltransferase from Rickettsia rickettsii.